Consider the following 172-residue polypeptide: Ribosomally synthesized cyclic peptide phomopsin precursor phomA (172 aa).

The first 18 residues, 1 to 18, serve as a signal peptide directing secretion; the sequence is MRFTPAIVIAAFCSLAVA. Propeptides lie at residues 19 to 35, 42 to 50, 57 to 65, 72 to 79, 86 to 93, 100 to 108, 115 to 122, 129 to 137, 144 to 151, 158 to 165, and lysine 172; these read APAAKAIARSPSEAVED, KKRGEAVED, KRGEAVED, and RKRGEAVED.

PhomA is processed by several endopeptidases including kexin proteases as well as the cluster-specific S41 family peptidase phomP1 and the oligopeptidase phomG to produce 10 identical copies of the hexapeptide Tyr-Val-Ile-Pro-Ile-Asp, that is further modified to yield phomapsins. The timing and order of proteolysis of the phomA precursor and PTMs are still unknown. Two tyrosinase-like enzymes, phomQ1 and phomQ2, catalyze the chlorination and hydroxylation of Tyr, respectively. PhomYb, is proposed to be involved in the construction of the macrocyclic structure. The other 4 ustYa family proteins may be involved in PTMs that generate the unique structure of phomopsin A. PhomYa is required for the hydroxylation of C-beta of Tyr. PhomYc, phomYd, and phomYe are responsible for the biosynthesis of 2,3-dehydroisoleucine (dIle), 2,3-dehydroaspartic acid (dAsp), and 3,4-dehydroproline (dPro), respectively. While dIle formation by phomYc is indispensable for the installation of dAsp by phomYd, the order of the other PTMs have not been elucidated yet. Most of the biosynthetic enzymes likely have broad substrate specificity, and thus, there might be a metabolic grid from a precursor to phomopsin A. The enzyme(s) responsible for the biosynthesis of 3,4-dehydrovaline (dVal) have also not been identified yet. Finally, phomM acts as an S-adenosylmethionine-dependent alpha-N-methyltransferase that catalyzes two successive N-methylation reactions, converting N-desmethyl-phomopsin A to phomopsin A and phomopsin A further to an N,N-dimethylated congener called phomopsin E.

Its pathway is mycotoxin biosynthesis. Functionally, ribosomally synthesized cyclic peptide phomopsin precursor; part of the gene cluster that mediates the biosynthesis of the phomopsins, a group of hexapeptide mycotoxins which infects lupins and causes lupinosis disease in livestock. The phomA translated product contains a 10-fold repeated peptide embedding the hexapeptide Tyr-Val-Ile-Pro-Ile-Asp, that is converted into phomapsins. After being excised from the precursor peptide by kexin proteases, the core peptides are cyclized and modified post-translationally by enzymes encoded within the corresponding gene cluster. This Diaporthe leptostromiformis (Lupinosis disease fungus) protein is Ribosomally synthesized cyclic peptide phomopsin precursor phomA.